We begin with the raw amino-acid sequence, 386 residues long: All-trans-retinol dehydrogenase [NAD(+)] ADH7 (386 aa).

Cys-59 contacts Zn(2+). Residue 60–64 (RTDDH) coordinates NAD(+). The Zn(2+) site is built by His-80, Cys-110, Cys-113, Cys-116, Cys-124, and Cys-186. NAD(+)-binding positions include 211 to 216 (GLGGVG), Asp-235, Lys-240, 281 to 283 (IGH), 304 to 306 (VGV), 329 to 331 (CVF), and Arg-381.

This sequence belongs to the zinc-containing alcohol dehydrogenase family. Class-IV subfamily. As to quaternary structure, homodimer. Requires Zn(2+) as cofactor. Preferentially expressed in stomach.

Its subcellular location is the cytoplasm. It catalyses the reaction a primary alcohol + NAD(+) = an aldehyde + NADH + H(+). The catalysed reaction is 10-hydroxydecanoate + NAD(+) = 10-oxodecanoate + NADH + H(+). It carries out the reaction all-trans-retinol + NAD(+) = all-trans-retinal + NADH + H(+). The enzyme catalyses 9-cis-retinol + NAD(+) = 9-cis-retinal + NADH + H(+). It catalyses the reaction all-trans-3,4-didehydroretinol + NAD(+) = all-trans-3,4-didehydroretinal + NADH + H(+). The catalysed reaction is all-trans-4-hydroxyretinol + NAD(+) = all-trans-4-hydroxyretinal + NADH + H(+). It carries out the reaction all-trans-4-oxoretinol + NAD(+) = all-trans-4-oxoretinal + NADH + H(+). The enzyme catalyses 12-hydroxydodecanoate + NAD(+) = 12-oxododecanoate + NADH + H(+). It catalyses the reaction 16-hydroxyhexadecanoate + NAD(+) = 16-oxohexadecanoate + NADH + H(+). The catalysed reaction is hexan-1-ol + NAD(+) = hexanal + NADH + H(+). It carries out the reaction (E)-hex-2-en-1-ol + NAD(+) = (E)-hex-2-enal + NADH + H(+). The enzyme catalyses (E)-4-hydroxynon-2-en-1-ol + NAD(+) = (E)-4-hydroxynon-2-enal + NADH + H(+). Retinol oxidation is inhibited by the detergent Tween 80. Ethanol inhibits both all-trans-retinol and 9-cis-retinol oxidation. 13-cis-retinol is an effective competitive inhibitor of the 9-cis-retinol oxidation. All-trans-retinoic acid is a powerful inhibitor of all-trans-retinol oxidation. 13-cis-retinoic acid is a powerful inhibitor of all-trans-retinol oxidation. Cimetidine competitively inhibited ethanol oxidation. Functionally, catalyzes the NAD-dependent oxidation of all-trans-retinol, alcohol, and omega-hydroxy fatty acids and their derivatives. Oxidizes preferentially all trans-retinol, all-trans-4-hydroxyretinol, 9-cis-retinol, 2-hexenol, and long chain omega-hydroxy fatty acids such as juniperic acid. In vitro can also catalyze the NADH-dependent reduction of all-trans-retinal and aldehydes and their derivatives. Reduces preferentially all trans-retinal, all-trans-4-oxoretinal and hexanal. Catalyzes in the oxidative direction with higher efficiency. Therefore may participate in retinoid metabolism, fatty acid omega-oxidation, and elimination of cytotoxic aldehydes produced by lipid peroxidation. This Homo sapiens (Human) protein is All-trans-retinol dehydrogenase [NAD(+)] ADH7.